A 2544-amino-acid chain; its full sequence is Highly reducing polyketide synthase pkhB (2544 aa).

The region spanning 9–438 (SEPIAIIGMS…GTNAHVILES (430 aa)) is the Ketosynthase family 3 (KS3) domain. Catalysis depends on for beta-ketoacyl synthase activity residues Cys182, His317, and His358. Residues 566–876 (VFTGQVFRRS…PYWGCLVRDE (311 aa)) form a malonyl-CoA:ACP transacylase (MAT) domain region. The N-terminal hotdog fold stretch occupies residues 948-1082 (HELLGMPVAG…GMVGIEESAV (135 aa)). The interval 948-1252 (HELLGMPVAG…VELAALGRGS (305 aa)) is dehydratase (DH) domain. The PKS/mFAS DH domain maps to 948-1254 (HELLGMPVAG…LAALGRGSSA (307 aa)). His980 serves as the catalytic Proton acceptor; for dehydratase activity. Residues 1095 to 1254 (YTRQPNPQDL…LAALGRGSSA (160 aa)) are C-terminal hotdog fold. Asp1165 (proton donor; for dehydratase activity) is an active-site residue. Residues 1398-1573 (SSLRQLSALL…FSGLDLEIYD (176 aa)) form a methyltransferase (CMet) domain region. The interval 1826-2142 (GHLGTLAFAE…TGDQMGKVVL (317 aa)) is enoyl reductase (ER) domain. The tract at residues 2169 to 2356 (ASYLIVGGVG…GVAIDLGPIS (188 aa)) is ketoreductase (KR) domain. A Carrier domain is found at 2462–2539 (EGARLIGAAI…ALAGLVAEKS (78 aa)). At Ser2499 the chain carries O-(pantetheine 4'-phosphoryl)serine.

It depends on pantetheine 4'-phosphate as a cofactor.

It functions in the pathway secondary metabolite biosynthesis. Functionally, highly reducing polyketide synthase; part of the pkh gene cluster that mediates the biosynthesis of 2,4-dihydroxy-6-[(3E,5E,7E)-2-oxonona-3,5,7-trienyl]benzaldehyde. The highly reducing polyketide synthase pkhB first produces the (2E,4E,6E)-octa-2,4,6-trienyl strater unit for the non-reducing polyketide synthase pkhA. This octatrienoyl starter is then loaded onto the SAT domain of the NR-PKS pkhA to be condensed with 4 malonyl-CoA units to yield 2,4-dihydroxy-6-[(3E,5E,7E)-2-oxonona-3,5,7-trienyl]benzaldehyde. The polypeptide is Highly reducing polyketide synthase pkhB (Emericella nidulans (strain FGSC A4 / ATCC 38163 / CBS 112.46 / NRRL 194 / M139) (Aspergillus nidulans)).